A 458-amino-acid polypeptide reads, in one-letter code: NADH-ubiquinone oxidoreductase chain 4 (458 aa).

A run of 13 helical transmembrane segments spans residues 23–43 (LLWT…TLTL), 59–79 (IDQF…LTIM), 99–119 (LLIL…LLMF), 148–168 (LYFL…LIMI), 174–194 (SLSI…TPWS), 197–217 (LWWI…IFHL), 227–247 (PIAG…YGMI), 260–280 (LAVP…SICL), 289–311 (IAYS…TPWA), 315–337 (ALAM…NITY), 355–375 (FPLM…LPPF), 396–416 (ILLL…MLIM), and 438–458 (LMLM…AIMI).

Belongs to the complex I subunit 4 family.

It is found in the mitochondrion membrane. The catalysed reaction is a ubiquinone + NADH + 5 H(+)(in) = a ubiquinol + NAD(+) + 4 H(+)(out). In terms of biological role, core subunit of the mitochondrial membrane respiratory chain NADH dehydrogenase (Complex I) that is believed to belong to the minimal assembly required for catalysis. Complex I functions in the transfer of electrons from NADH to the respiratory chain. The immediate electron acceptor for the enzyme is believed to be ubiquinone. This Petromyzon marinus (Sea lamprey) protein is NADH-ubiquinone oxidoreductase chain 4 (MT-ND4).